Here is a 576-residue protein sequence, read N- to C-terminus: Lysine--tRNA ligase (576 aa).

Glu-412 and Glu-419 together coordinate Mg(2+).

Belongs to the class-II aminoacyl-tRNA synthetase family. In terms of assembly, homodimer. Mg(2+) serves as cofactor.

The protein localises to the cytoplasm. It catalyses the reaction tRNA(Lys) + L-lysine + ATP = L-lysyl-tRNA(Lys) + AMP + diphosphate. In Parabacteroides distasonis (strain ATCC 8503 / DSM 20701 / CIP 104284 / JCM 5825 / NCTC 11152), this protein is Lysine--tRNA ligase.